Consider the following 589-residue polypeptide: Protein MICRORCHIDIA 3 (589 aa).

The disordered stretch occupies residues 1 to 33 (MAPESKNAGVSVVVNLDSDSDSDNDDGVGGRGA). Residues 542-589 (MRCEEYVKKETELEQTVSNLAKELEETKSKCARLALLVDAKRREMQQV) are a coiled coil.

It belongs to the MORC ATPase protein family. As to quaternary structure, homodimer and heterodimer. Component of an RNA-directed DNA methylation (RdDM) complex. It depends on Mg(2+) as a cofactor. Mn(2+) serves as cofactor.

Its subcellular location is the nucleus. In terms of biological role, exhibits ATPase activity. Binds DNA/RNA in a non-specific manner and exhibits endonuclease activity. Probably involved in DNA repair. Involved in RNA-directed DNA methylation (RdDM) as a component of the RdDM machinery and required for gene silencing. May also be involved in the regulation of chromatin architecture to maintain gene silencing. The chain is Protein MICRORCHIDIA 3 from Arabidopsis thaliana (Mouse-ear cress).